The following is a 304-amino-acid chain: Acetylglutamate kinase (304 aa).

Substrate contacts are provided by residues 82–83 (GG), Arg104, and Asn197.

It belongs to the acetylglutamate kinase family. ArgB subfamily.

Its subcellular location is the cytoplasm. It carries out the reaction N-acetyl-L-glutamate + ATP = N-acetyl-L-glutamyl 5-phosphate + ADP. Its pathway is amino-acid biosynthesis; L-arginine biosynthesis; N(2)-acetyl-L-ornithine from L-glutamate: step 2/4. In terms of biological role, catalyzes the ATP-dependent phosphorylation of N-acetyl-L-glutamate. The chain is Acetylglutamate kinase from Prochlorococcus marinus (strain NATL1A).